Here is a 294-residue protein sequence, read N- to C-terminus: Glycine--tRNA ligase alpha subunit (294 aa).

This sequence belongs to the class-II aminoacyl-tRNA synthetase family. Tetramer of two alpha and two beta subunits.

It localises to the cytoplasm. The enzyme catalyses tRNA(Gly) + glycine + ATP = glycyl-tRNA(Gly) + AMP + diphosphate. The protein is Glycine--tRNA ligase alpha subunit of Lawsonia intracellularis (strain PHE/MN1-00).